A 436-amino-acid polypeptide reads, in one-letter code: UDP-N-acetylmuramoylalanine--D-glutamate ligase (436 aa).

112 to 118 is an ATP binding site; that stretch reads GSNGKST.

The protein belongs to the MurCDEF family.

The protein resides in the cytoplasm. The catalysed reaction is UDP-N-acetyl-alpha-D-muramoyl-L-alanine + D-glutamate + ATP = UDP-N-acetyl-alpha-D-muramoyl-L-alanyl-D-glutamate + ADP + phosphate + H(+). The protein operates within cell wall biogenesis; peptidoglycan biosynthesis. Its function is as follows. Cell wall formation. Catalyzes the addition of glutamate to the nucleotide precursor UDP-N-acetylmuramoyl-L-alanine (UMA). This Photorhabdus laumondii subsp. laumondii (strain DSM 15139 / CIP 105565 / TT01) (Photorhabdus luminescens subsp. laumondii) protein is UDP-N-acetylmuramoylalanine--D-glutamate ligase.